A 437-amino-acid chain; its full sequence is GTPase Der (437 aa).

2 EngA-type G domains span residues 4–168 (NIVA…PEKP) and 178–353 (PRFA…ENRK). Residues 10–17 (GRPNVGKS), 57–61 (DTGGY), 120–123 (NKVD), 184–191 (GRPNAGKS), 231–235 (DTAGI), and 296–299 (NKWD) each bind GTP. Residues 354–437 (QRISTSKFNE…VPIDIYIREK (84 aa)) enclose the KH-like domain.

This sequence belongs to the TRAFAC class TrmE-Era-EngA-EngB-Septin-like GTPase superfamily. EngA (Der) GTPase family. In terms of assembly, associates with the 50S ribosomal subunit.

GTPase that plays an essential role in the late steps of ribosome biogenesis. This Flavobacterium johnsoniae (strain ATCC 17061 / DSM 2064 / JCM 8514 / BCRC 14874 / CCUG 350202 / NBRC 14942 / NCIMB 11054 / UW101) (Cytophaga johnsonae) protein is GTPase Der.